An 84-amino-acid chain; its full sequence is Cell division topological specificity factor (84 aa).

It belongs to the MinE family.

Its function is as follows. Prevents the cell division inhibition by proteins MinC and MinD at internal division sites while permitting inhibition at polar sites. This ensures cell division at the proper site by restricting the formation of a division septum at the midpoint of the long axis of the cell. The sequence is that of Cell division topological specificity factor from Cupriavidus metallidurans (strain ATCC 43123 / DSM 2839 / NBRC 102507 / CH34) (Ralstonia metallidurans).